A 188-amino-acid polypeptide reads, in one-letter code: V-type ATP synthase subunit E (188 aa).

Belongs to the V-ATPase E subunit family.

In terms of biological role, produces ATP from ADP in the presence of a proton gradient across the membrane. The sequence is that of V-type ATP synthase subunit E (atpE) from Thermus thermophilus (strain ATCC 27634 / DSM 579 / HB8).